The sequence spans 348 residues: Phosphate acyltransferase (348 aa).

This sequence belongs to the PlsX family. In terms of assembly, homodimer. Probably interacts with PlsY.

The protein resides in the cytoplasm. It catalyses the reaction a fatty acyl-[ACP] + phosphate = an acyl phosphate + holo-[ACP]. Its pathway is lipid metabolism; phospholipid metabolism. Catalyzes the reversible formation of acyl-phosphate (acyl-PO(4)) from acyl-[acyl-carrier-protein] (acyl-ACP). This enzyme utilizes acyl-ACP as fatty acyl donor, but not acyl-CoA. In Synechocystis sp. (strain ATCC 27184 / PCC 6803 / Kazusa), this protein is Phosphate acyltransferase.